The chain runs to 201 residues: Probable cobalt-precorrin-6B C(15)-methyltransferase (decarboxylating) (201 aa).

Residues Thr-28, 52-56 (GTGTG), Asp-76, and Ala-105 contribute to the S-adenosyl-L-methionine site.

Belongs to the methyltransferase superfamily. Archaeal-type CbiT family.

The catalysed reaction is Co-precorrin-6B + S-adenosyl-L-methionine = Co-precorrin-7 + S-adenosyl-L-homocysteine + CO2. The protein operates within cofactor biosynthesis; adenosylcobalamin biosynthesis; cob(II)yrinate a,c-diamide from sirohydrochlorin (anaerobic route): step 8/10. Catalyzes the methylation of C-15 in cobalt-precorrin-6B followed by the decarboxylation of C-12 to form cobalt-precorrin-7. In Thermoplasma volcanium (strain ATCC 51530 / DSM 4299 / JCM 9571 / NBRC 15438 / GSS1), this protein is Probable cobalt-precorrin-6B C(15)-methyltransferase (decarboxylating).